The primary structure comprises 70 residues: Peptide Hp1035 (70 aa).

The signal sequence occupies residues 1–23; it reads MKTQFVILLVALVLFQMFAQSEA. Phenylalanine amide is present on F36. The propeptide occupies 40–70; sequence GLQDLDMDDLDQLFDGEISQADINFLNQLMR.

Belongs to the non-disulfide-bridged peptide (NDBP) superfamily. Short antimicrobial peptide (group 4) family. In terms of tissue distribution, expressed by the venom gland.

The protein localises to the secreted. It localises to the target cell membrane. Its function is as follows. Amphipathic peptide with antimicrobial activity. This chain is Peptide Hp1035, found in Heterometrus petersii (Asian forest scorpion).